Reading from the N-terminus, the 320-residue chain is Malate dehydrogenase (320 aa).

NAD(+)-binding positions include 10 to 15 (GSGMIG) and Asp34. Arg83 and Arg89 together coordinate substrate. Residues Asn96 and 119-121 (ITN) contribute to the NAD(+) site. Substrate contacts are provided by Asn121 and Arg152. The active-site Proton acceptor is the His176.

It belongs to the LDH/MDH superfamily. MDH type 3 family.

It carries out the reaction (S)-malate + NAD(+) = oxaloacetate + NADH + H(+). Its function is as follows. Catalyzes the reversible oxidation of malate to oxaloacetate. In Brucella abortus (strain S19), this protein is Malate dehydrogenase.